Here is a 95-residue protein sequence, read N- to C-terminus: MKFAAIFLVTCVFFSLFSSNLSQGEKLSMDPTRRPWCPSKKQMFGGNCGNDGDSLCLMLLAASWDESLRHSSISCNCTTYPNYKILCSCPNMICP.

Residues 1 to 24 (MKFAAIFLVTCVFFSLFSSNLSQG) form the signal peptide. Disulfide bonds link Cys37–Cys94, Cys48–Cys77, Cys56–Cys87, and Cys75–Cys89.

This sequence belongs to the DEFL family.

It localises to the secreted. This chain is Defensin-like protein 247 (SCRL6), found in Arabidopsis thaliana (Mouse-ear cress).